A 309-amino-acid chain; its full sequence is MPVRERPSMIVRPRPNFLQLFFIMRGSVVPRILPQIFGFAVYSAVILALARWFELDLGVFNITPFGLVGVTLSIYLSFRNNAAYDRWWEARKLWGTLVFEIRNLARATTSLIPDPAEQRALLMEALAFCHFLRGQLRKTDSIKDARAFIDAQAETVAGFANPADEMVRRMGRRANAQRRAGDVDPIGFRILDERLASITAIQAGCERIAGTPLPFAYTLLVHRTAYIVCLLLPIGLISTTGWATPLFTALIAYTFFGLDALSEELEDPFGTEANDLALDGLCRVCEISVFEALGEAPPKMLPAEKFYFS.

A run of 3 helical transmembrane segments spans residues 32 to 52, 58 to 78, and 227 to 247; these read ILPQ…LARW, GVFN…YLSF, and IVCL…TPLF.

The protein belongs to the anion channel-forming bestrophin (TC 1.A.46) family.

The protein localises to the cell membrane. This chain is Voltage-dependent anion channel-forming protein mll4386, found in Mesorhizobium japonicum (strain LMG 29417 / CECT 9101 / MAFF 303099) (Mesorhizobium loti (strain MAFF 303099)).